The chain runs to 87 residues: RNA-binding protein Hfq (87 aa).

Positions 9–68 (DPFLNTLRRERIPVSIYLVNGIKLQGYIESFDQFVILLKNSISQMIYKHAISTVVPNHTN) constitute a Sm domain. The segment at 66-87 (HTNNQEHNQSQYNNNNACISKP) is disordered.

It belongs to the Hfq family. In terms of assembly, homohexamer.

In terms of biological role, RNA chaperone that binds small regulatory RNA (sRNAs) and mRNAs to facilitate mRNA translational regulation in response to envelope stress, environmental stress and changes in metabolite concentrations. Also binds with high specificity to tRNAs. This Wigglesworthia glossinidia brevipalpis protein is RNA-binding protein Hfq.